A 126-amino-acid chain; its full sequence is Holo-[acyl-carrier-protein] synthase (126 aa).

Mg(2+)-binding residues include Asp-9 and Glu-58.

This sequence belongs to the P-Pant transferase superfamily. AcpS family. The cofactor is Mg(2+).

The protein localises to the cytoplasm. The catalysed reaction is apo-[ACP] + CoA = holo-[ACP] + adenosine 3',5'-bisphosphate + H(+). Its function is as follows. Transfers the 4'-phosphopantetheine moiety from coenzyme A to a Ser of acyl-carrier-protein. The sequence is that of Holo-[acyl-carrier-protein] synthase from Aliivibrio salmonicida (strain LFI1238) (Vibrio salmonicida (strain LFI1238)).